Consider the following 374-residue polypeptide: Queuine tRNA-ribosyltransferase (374 aa).

The Proton acceptor role is filled by Asp-89. Substrate contacts are provided by residues 89-93 (DSGGF), Asp-143, Gln-187, and Gly-214. The interval 245–251 (GVGKPED) is RNA binding. Asp-264 serves as the catalytic Nucleophile. The tract at residues 269 to 273 (TRNAR) is RNA binding; important for wobble base 34 recognition. Zn(2+) is bound by residues Cys-302, Cys-304, Cys-307, and His-333.

This sequence belongs to the queuine tRNA-ribosyltransferase family. In terms of assembly, homodimer. Within each dimer, one monomer is responsible for RNA recognition and catalysis, while the other monomer binds to the replacement base PreQ1. The cofactor is Zn(2+).

It catalyses the reaction 7-aminomethyl-7-carbaguanine + guanosine(34) in tRNA = 7-aminomethyl-7-carbaguanosine(34) in tRNA + guanine. It functions in the pathway tRNA modification; tRNA-queuosine biosynthesis. Catalyzes the base-exchange of a guanine (G) residue with the queuine precursor 7-aminomethyl-7-deazaguanine (PreQ1) at position 34 (anticodon wobble position) in tRNAs with GU(N) anticodons (tRNA-Asp, -Asn, -His and -Tyr). Catalysis occurs through a double-displacement mechanism. The nucleophile active site attacks the C1' of nucleotide 34 to detach the guanine base from the RNA, forming a covalent enzyme-RNA intermediate. The proton acceptor active site deprotonates the incoming PreQ1, allowing a nucleophilic attack on the C1' of the ribose to form the product. After dissociation, two additional enzymatic reactions on the tRNA convert PreQ1 to queuine (Q), resulting in the hypermodified nucleoside queuosine (7-(((4,5-cis-dihydroxy-2-cyclopenten-1-yl)amino)methyl)-7-deazaguanosine). The polypeptide is Queuine tRNA-ribosyltransferase (Photorhabdus laumondii subsp. laumondii (strain DSM 15139 / CIP 105565 / TT01) (Photorhabdus luminescens subsp. laumondii)).